The chain runs to 560 residues: Proteasome-associated ATPase (560 aa).

Residues 1–19 (MSQQHDDRRPPDTADRDLA) are compositionally biased toward basic and acidic residues. The interval 1–21 (MSQQHDDRRPPDTADRDLARQ) is disordered. The stretch at 16–55 (RDLARQATSLAEKNERLTAALTAARAQLVEMKAQLEEVSK) forms a coiled coil. 237–242 (GCGKTL) contacts ATP. Residues 559 to 560 (YL) form a docks into pockets in the proteasome alpha-ring region.

Belongs to the AAA ATPase family. As to quaternary structure, homohexamer. Assembles into a hexameric ring structure that caps the 20S proteasome core. Strongly interacts with the prokaryotic ubiquitin-like protein Pup through a hydrophobic interface; the interacting region of ARC lies in its N-terminal coiled-coil domain. There is one Pup binding site per ARC hexamer ring. Upon ATP-binding, the C-terminus of ARC interacts with the alpha-rings of the proteasome core, possibly by binding to the intersubunit pockets.

It participates in protein degradation; proteasomal Pup-dependent pathway. In terms of biological role, ATPase which is responsible for recognizing, binding, unfolding and translocation of pupylated proteins into the bacterial 20S proteasome core particle. May be essential for opening the gate of the 20S proteasome via an interaction with its C-terminus, thereby allowing substrate entry and access to the site of proteolysis. Thus, the C-termini of the proteasomal ATPase may function like a 'key in a lock' to induce gate opening and therefore regulate proteolysis. The chain is Proteasome-associated ATPase from Beutenbergia cavernae (strain ATCC BAA-8 / DSM 12333 / CCUG 43141 / JCM 11478 / NBRC 16432 / NCIMB 13614 / HKI 0122).